The primary structure comprises 1009 residues: Mediator of RNA polymerase II transcription subunit 5 (1009 aa).

It belongs to the Mediator complex subunit 5 family. Component of the Mediator complex.

The protein resides in the nucleus. In terms of biological role, component of the Mediator complex, a coactivator involved in the regulated transcription of nearly all RNA polymerase II-dependent genes. Mediator functions as a bridge to convey information from gene-specific regulatory proteins to the basal RNA polymerase II transcription machinery. Mediator is recruited to promoters by direct interactions with regulatory proteins and serves as a scaffold for the assembly of a functional preinitiation complex with RNA polymerase II and the general transcription factors. This chain is Mediator of RNA polymerase II transcription subunit 5 (nut1), found in Neosartorya fischeri (strain ATCC 1020 / DSM 3700 / CBS 544.65 / FGSC A1164 / JCM 1740 / NRRL 181 / WB 181) (Aspergillus fischerianus).